The sequence spans 439 residues: 23S rRNA (uracil(1939)-C(5))-methyltransferase RlmD (439 aa).

Positions 10-68 (KSTQPQRIEFTVDSLDHHCVGIGRHQGKAIFIEGALPGEQVKARILDDKKQYAHAALQQ) constitute a TRAM domain. Positions 81, 87, 90, and 169 each coordinate [4Fe-4S] cluster. S-adenosyl-L-methionine contacts are provided by Gln-273, Phe-302, Asn-307, Glu-323, Asp-350, and Asp-371. Cys-397 serves as the catalytic Nucleophile.

It belongs to the class I-like SAM-binding methyltransferase superfamily. RNA M5U methyltransferase family. RlmD subfamily.

It catalyses the reaction uridine(1939) in 23S rRNA + S-adenosyl-L-methionine = 5-methyluridine(1939) in 23S rRNA + S-adenosyl-L-homocysteine + H(+). Its function is as follows. Catalyzes the formation of 5-methyl-uridine at position 1939 (m5U1939) in 23S rRNA. In Aeromonas salmonicida (strain A449), this protein is 23S rRNA (uracil(1939)-C(5))-methyltransferase RlmD.